The chain runs to 153 residues: UPF0235 protein C15orf40 (153 aa).

Residues 1-12 (MLRLRSGLRHLR) are compositionally biased toward basic residues. Positions 1–55 (MLRLRSGLRHLRATPNTRGSARLLCAEMPKKAGATTKGKSQSKEPERPLPPLGPV) are disordered. At Ser-116 the chain carries Phosphoserine.

This sequence belongs to the UPF0235 family.

This is UPF0235 protein C15orf40 (C15orf40) from Homo sapiens (Human).